The primary structure comprises 185 residues: Coiled-coil domain-containing protein 32 (185 aa).

The stretch at 78–98 (LASLEKKLRRIKGLNQEVTSK) forms a coiled coil. Residues 159–185 (IPPESQVEKPVAEDEPAAGDKPAAAEQ) are disordered.

As to quaternary structure, interacts with AP2S1; the interaction is direct and mediates association with adaptor protein complex 2 (AP-2).

The protein localises to the membrane. It localises to the coated pit. Regulates clathrin-mediated endocytsois of cargos such as transferrin probably through the association and modulation of adaptor protein complex 2 (AP-2). Has a role in ciliogenesis. Required for proper cephalic and left/right axis development. This is Coiled-coil domain-containing protein 32 from Homo sapiens (Human).